The sequence spans 270 residues: Thiamine thiazole synthase (270 aa).

Residues Ala-39, 58 to 59 (EQ), Gly-66, and Leu-130 contribute to the NAD(+) site. Cys-159 bears the 2,3-didehydroalanine (Cys) mark. Residue Asp-161 participates in NAD(+) binding. 2 residues coordinate Fe cation: Asp-161 and His-176. Ile-223 serves as a coordination point for NAD(+). Arg-233 provides a ligand contact to glycine.

The protein belongs to the THI4 family. In terms of assembly, homooctamer; tetramer of dimers. Fe(2+) is required as a cofactor. During the catalytic reaction, a sulfide is transferred from Cys-159 to a reaction intermediate, generating a dehydroalanine residue.

It carries out the reaction [ADP-thiazole synthase]-L-cysteine + glycine + NAD(+) = [ADP-thiazole synthase]-dehydroalanine + ADP-5-ethyl-4-methylthiazole-2-carboxylate + nicotinamide + 3 H2O + 2 H(+). Its pathway is cofactor biosynthesis; thiamine diphosphate biosynthesis. Involved in biosynthesis of the thiamine precursor thiazole. Catalyzes the conversion of NAD and glycine to adenosine diphosphate 5-(2-hydroxyethyl)-4-methylthiazole-2-carboxylic acid (ADT), an adenylated thiazole intermediate. The reaction includes an iron-dependent sulfide transfer from a conserved cysteine residue of the protein to a thiazole intermediate. The enzyme can only undergo a single turnover, which suggests it is a suicide enzyme. This is Thiamine thiazole synthase from Aeropyrum pernix (strain ATCC 700893 / DSM 11879 / JCM 9820 / NBRC 100138 / K1).